A 946-amino-acid polypeptide reads, in one-letter code: Phosphatidylinositol 4,5-bisphosphate 5-phosphatase INP51 (946 aa).

The SAC domain occupies Leu-151–Lys-480. Disordered regions lie at residues Ser-872–Lys-902 and Pro-927–Arg-946. A compositionally biased stretch (acidic residues) spans Glu-936–Arg-946.

Belongs to the synaptojanin family. This sequence in the central section; belongs to the inositol 1,4,5-trisphosphate 5-phosphatase family. In terms of assembly, interacts with IRS4 and TAX4.

The protein localises to the cytoplasm. It localises to the cytoskeleton. The protein resides in the actin patch. The enzyme catalyses a 1,2-diacyl-sn-glycero-3-phospho-(1D-myo-inositol-4,5-bisphosphate) + H2O = a 1,2-diacyl-sn-glycero-3-phospho-(1D-myo-inositol 4-phosphate) + phosphate. With respect to regulation, IRS4 and TAX4 are both positive regulator of INP51 activity and phosphatidylinositol 4,5-bisphosphate turnover. Controls the cellular levels and subcellular distribution of phosphatidylinositol 4,5-bisphosphate (PtdIns(4,5)P2). Does not utilize phosphatidylinositol 3,5-bisphosphate (PtdIns(3,5)P2), nor phosphatidylinositol 3-phosphate (PtdIns(3)P) and phosphatidylinositol 4-phosphate (PtdIns(4)P). Plays an essential role in a TGN (trans Golgi network)-to-early endosome pathway. Involved in endocytosis and acts as a negative regulator of the Slm pathway which modulates polarized actin assembly and growth. This Saccharomyces cerevisiae (strain ATCC 204508 / S288c) (Baker's yeast) protein is Phosphatidylinositol 4,5-bisphosphate 5-phosphatase INP51 (INP51).